The sequence spans 1025 residues: Retrovirus-related Pol polyprotein from type-1 retrotransposable element R2 (1025 aa).

Residues 1 to 11 (NQIKKSNTSTG) show a composition bias toward polar residues. The tract at residues 1–38 (NQIKKSNTSTGARIPKAMTNPADNFAGGQWKPPGRRSA) is disordered. The segment at 46 to 69 (FVCEHCLRAFTTNTGRGLHIKRAH) adopts a C2H2-type zinc-finger fold. The span at 146–158 (NRARETELTRLET) shows a compositional bias: basic and acidic residues. A disordered region spans residues 146–172 (NRARETELTRLETADEDPASQEQDNPN). One can recognise a Reverse transcriptase domain in the interval 358 to 635 (MIMYHGQCPR…DQWKYLGVVY (278 aa)). Residues 755–1025 (SLLGGDWVAE…YRTERRRTAN (271 aa)) form a nucleic acid-binding endonuclease region.

The enzyme catalyses DNA(n) + a 2'-deoxyribonucleoside 5'-triphosphate = DNA(n+1) + diphosphate. This chain is Retrovirus-related Pol polyprotein from type-1 retrotransposable element R2, found in Nasonia vitripennis (Parasitic wasp).